Reading from the N-terminus, the 160-residue chain is uncharacterized protein (160 aa).

The first 29 residues, 1–29 (MCGLGIVPMVKPALFGMLILVIGTSTVQA), serve as a signal peptide directing secretion.

This is an uncharacterized protein from Sinorhizobium fredii (strain NBRC 101917 / NGR234).